A 239-amino-acid chain; its full sequence is DNA repair protein RecO (239 aa).

This sequence belongs to the RecO family.

Involved in DNA repair and RecF pathway recombination. This is DNA repair protein RecO from Tolumonas auensis (strain DSM 9187 / NBRC 110442 / TA 4).